The chain runs to 70 residues: Putative membrane protein insertion efficiency factor (70 aa).

It belongs to the UPF0161 family.

Its subcellular location is the cell inner membrane. In terms of biological role, could be involved in insertion of integral membrane proteins into the membrane. The chain is Putative membrane protein insertion efficiency factor from Rhizorhabdus wittichii (strain DSM 6014 / CCUG 31198 / JCM 15750 / NBRC 105917 / EY 4224 / RW1) (Sphingomonas wittichii).